The sequence spans 338 residues: RNA 3'-terminal phosphate cyclase (338 aa).

Residues Gln-103 and 283–287 (YLADQ) contribute to the ATP site. His-308 functions as the Tele-AMP-histidine intermediate in the catalytic mechanism.

This sequence belongs to the RNA 3'-terminal cyclase family. Type 1 subfamily.

Its subcellular location is the cytoplasm. It catalyses the reaction a 3'-end 3'-phospho-ribonucleotide-RNA + ATP = a 3'-end 2',3'-cyclophospho-ribonucleotide-RNA + AMP + diphosphate. Catalyzes the conversion of 3'-phosphate to a 2',3'-cyclic phosphodiester at the end of RNA. The mechanism of action of the enzyme occurs in 3 steps: (A) adenylation of the enzyme by ATP; (B) transfer of adenylate to an RNA-N3'P to produce RNA-N3'PP5'A; (C) and attack of the adjacent 2'-hydroxyl on the 3'-phosphorus in the diester linkage to produce the cyclic end product. The biological role of this enzyme is unknown but it is likely to function in some aspects of cellular RNA processing. This chain is RNA 3'-terminal phosphate cyclase, found in Escherichia coli O139:H28 (strain E24377A / ETEC).